The primary structure comprises 625 residues: Probable potassium transport system protein Kup (625 aa).

Helical transmembrane passes span 10 to 30, 50 to 70, 102 to 122, 135 to 155, 172 to 192, 214 to 234, 251 to 271, 284 to 304, 340 to 360, 369 to 389, 397 to 417, and 422 to 442; these read LAAL…TSPL, LLGV…LKYV, YFPL…DSVI, LGVA…AILV, FGPV…VNII, GFLA…AEAL, FLIA…LLLL, LGAW…IIAS, IYIP…VIGF, AYGI…FFVI, LILC…LFSA, and LFHG…LMLT.

Belongs to the HAK/KUP transporter (TC 2.A.72) family.

The protein resides in the cell inner membrane. It catalyses the reaction K(+)(in) + H(+)(in) = K(+)(out) + H(+)(out). Functionally, transport of potassium into the cell. Likely operates as a K(+):H(+) symporter. This Herminiimonas arsenicoxydans protein is Probable potassium transport system protein Kup.